We begin with the raw amino-acid sequence, 450 residues long: Magnesium transporter MgtE (450 aa).

The Cytoplasmic segment spans residues 1–283 (MEEKLAVSLQ…SEAGPVALWL (283 aa)). The Mg(2+) site is built by Glu59, Asp91, Asp95, and Gly136. CBS domains are found at residues 138–200 (MTPE…RVAE) and 202–258 (MNPK…EATE). Tyr170, Ser185, Arg187, Asp188, and Val207 together coordinate ATP. Residues Glu216, Ala223, Asp226, Asp247, Asp250, Glu255, Glu258, and Asp259 each coordinate Mg(2+). Ca(2+) is bound at residue Glu275. 4 residues coordinate Mn(2+): Glu275, Gln304, Glu307, and Glu311. The helical transmembrane segment at 284–306 (ARVRWLVILILTGMVTSSILQGF) threads the bilayer. At 307 to 315 (ESVLEAVTA) the chain is on the periplasmic side. Glu311 serves as a coordination point for Ca(2+). Residues 316-337 (LAFYVPVLLGTGGNTGNQSATL) traverse the membrane as a helical segment. The Cytoplasmic portion of the chain corresponds to 338 to 351 (IIRALATRDLDLRD). The chain crosses the membrane as a helical span at residues 352–381 (WRRVFLKEMGVGLLLGLTLSFLLVGKVYWD). Residues 382 to 385 (GHPL) are Periplasmic-facing. His383 contacts Mn(2+). The chain crosses the membrane as a helical span at residues 386–409 (LLPVVGVSLVLIVFFANLVGAMLP). At 410-420 (FLLRRLGVDPA) the chain is on the cytoplasmic side. The Mg(2+) site is built by Asp418, Ala428, and Asp432. A helical membrane pass occupies residues 421-443 (LVSNPLVATLSDVTGLLIYLSVA). Over 444–450 (RLLLEAV) the chain is Periplasmic.

It belongs to the SLC41A transporter family. As to quaternary structure, homodimer.

It is found in the cell inner membrane. The catalysed reaction is Mg(2+)(in) = Mg(2+)(out). The channel activity is regulated via the N-terminal cytoplasmic region, which acts as a Mg(2+) sensor to regulate the gating of the ion-conducting pore in response to the intracellular magnesium concentration. Under high-intracellular magnesium conditions, binding of magnesium to the N-terminal cytoplasmic domain stabilizes the closed conformation of the channel. Under low-intracellular magnesium conditions, the channel is in equilibrium between the open and closed states. A cation-binding site within the membrane (M1) strictly recognizes the size and geometry of the Mg(2+) hydration shells, which may be important for the selective transport of Mg(2+) over other cations. Cation-binding sites on the periplasmic side (M2 and M3) regulate channel opening and prevent conduction of near-cognate cations. Binding of Mn(2+) to the periplasmic sites strongly inhibits the Mg(2+) transport activity. In addition, activity is regulated by ATP, which binds to MgtE and modulates its Mg(2+)-dependent channel gating. ATP binding enhances the intracellular domain affinity for Mg(2+) within physiological concentrations of this divalent cation, enabling MgtE to function as an in vivo Mg(2+) sensor. ATP dissociation from MgtE upregulates Mg(2+) influx at both high and low intracellular Mg(2+) concentrations. In terms of biological role, highly selective magnesium channel that plays an important role in Mg(2+) homeostasis. Functions as a Mg(2+)-dependent gating channel. Exhibits low activity with cobalt, suggesting that it might also be involved in the uptake of Co(2+) as a micronutrient. Also exhibits low activity with Ca(2+), but it shows almost no activity with Mn(2+). This chain is Magnesium transporter MgtE, found in Thermus thermophilus (strain ATCC 27634 / DSM 579 / HB8).